Reading from the N-terminus, the 436-residue chain is Methylenetetrahydrofolate--tRNA-(uracil-5-)-methyltransferase TrmFO (436 aa).

8–13 (GAGLAG) contacts FAD.

The protein belongs to the MnmG family. TrmFO subfamily. The cofactor is FAD.

The protein localises to the cytoplasm. The enzyme catalyses uridine(54) in tRNA + (6R)-5,10-methylene-5,6,7,8-tetrahydrofolate + NADH + H(+) = 5-methyluridine(54) in tRNA + (6S)-5,6,7,8-tetrahydrofolate + NAD(+). It catalyses the reaction uridine(54) in tRNA + (6R)-5,10-methylene-5,6,7,8-tetrahydrofolate + NADPH + H(+) = 5-methyluridine(54) in tRNA + (6S)-5,6,7,8-tetrahydrofolate + NADP(+). Its function is as follows. Catalyzes the folate-dependent formation of 5-methyl-uridine at position 54 (M-5-U54) in all tRNAs. This Persephonella marina (strain DSM 14350 / EX-H1) protein is Methylenetetrahydrofolate--tRNA-(uracil-5-)-methyltransferase TrmFO.